The following is a 61-amino-acid chain: Large ribosomal subunit protein bL28 (61 aa).

The protein belongs to the bacterial ribosomal protein bL28 family.

This chain is Large ribosomal subunit protein bL28, found in Geobacillus kaustophilus (strain HTA426).